We begin with the raw amino-acid sequence, 122 residues long: Riboflavin kinase (122 aa).

4-9 contributes to the CDP binding site; the sequence is GFGEGA. Mg(2+) is bound by residues threonine 33 and asparagine 35. FMN contacts are provided by threonine 84 and glutamate 92. Position 97–100 (97–100) interacts with CDP; it reads VNLR.

The protein belongs to the archaeal riboflavin kinase family. Mg(2+) serves as cofactor.

It carries out the reaction riboflavin + CTP = CDP + FMN + H(+). It participates in cofactor biosynthesis; FMN biosynthesis; FMN from riboflavin (CTP route): step 1/1. Catalyzes the CTP-dependent phosphorylation of riboflavin (vitamin B2) to form flavin mononucleotide (FMN). This is Riboflavin kinase from Methanothermobacter thermautotrophicus (strain ATCC 29096 / DSM 1053 / JCM 10044 / NBRC 100330 / Delta H) (Methanobacterium thermoautotrophicum).